Here is a 417-residue protein sequence, read N- to C-terminus: Serine hydroxymethyltransferase (417 aa).

Residues leucine 121 and 125–127 each bind (6S)-5,6,7,8-tetrahydrofolate; that span reads GHL. At lysine 229 the chain carries N6-(pyridoxal phosphate)lysine. Position 355-357 (355-357) interacts with (6S)-5,6,7,8-tetrahydrofolate; it reads SPF.

This sequence belongs to the SHMT family. Homodimer. Requires pyridoxal 5'-phosphate as cofactor.

It localises to the cytoplasm. The enzyme catalyses (6R)-5,10-methylene-5,6,7,8-tetrahydrofolate + glycine + H2O = (6S)-5,6,7,8-tetrahydrofolate + L-serine. It participates in one-carbon metabolism; tetrahydrofolate interconversion. It functions in the pathway amino-acid biosynthesis; glycine biosynthesis; glycine from L-serine: step 1/1. Its function is as follows. Catalyzes the reversible interconversion of serine and glycine with tetrahydrofolate (THF) serving as the one-carbon carrier. This reaction serves as the major source of one-carbon groups required for the biosynthesis of purines, thymidylate, methionine, and other important biomolecules. Also exhibits THF-independent aldolase activity toward beta-hydroxyamino acids, producing glycine and aldehydes, via a retro-aldol mechanism. The protein is Serine hydroxymethyltransferase of Xanthomonas campestris pv. campestris (strain 8004).